The primary structure comprises 190 residues: HTH-type transcriptional repressor AcnR (190 aa).

The HTH tetR-type domain maps to 10 to 70; sequence SMRRQEILEG…ALAREDAARM (61 aa). A DNA-binding region (H-T-H motif) is located at residues 33–52; it reads TVRRLEETVGKSRGAIFHHF. Citrate-binding positions include 79 to 80, Arg130, and Asn134; that span reads LV. Mg(2+) is bound at residue Glu181. Arg185 contacts citrate.

As to quaternary structure, homodimer.

Its function is as follows. AcnR negatively controls the expression of the aconitase gene acn. This Corynebacterium diphtheriae (strain ATCC 700971 / NCTC 13129 / Biotype gravis) protein is HTH-type transcriptional repressor AcnR.